Reading from the N-terminus, the 1133-residue chain is Exportin-4 (1133 aa).

This sequence belongs to the exportin family. Interacts with Ran and cargo proteins in a GTP-dependent manner.

The protein resides in the cytoplasm. It is found in the nucleus. Functionally, mediates the nuclear export of proteins (cargos). In the nucleus binds cooperatively to its cargo and to the GTPase Ran in its active GTP-bound form. Docking of this trimeric complex to the nuclear pore complex (NPC) is mediated through binding to nucleoporins. Upon transit of a nuclear export complex into the cytoplasm, disassembling of the complex and hydrolysis of Ran-GTP to Ran-GDP cause release of the cargo from the export receptor. Xpo4 then return to the nuclear compartment and mediate another round of transport. The directionality of nuclear export is thought to be conferred by an asymmetric distribution of the GTP- and GDP-bound forms of Ran between the cytoplasm and nucleus. This chain is Exportin-4 (xpo4), found in Dictyostelium discoideum (Social amoeba).